Consider the following 198-residue polypeptide: Cyclin-dependent kinase inhibitor 1B (198 aa).

The span at M1–P11 shows a compositional bias: polar residues. The interval M1–G34 is disordered. S10 bears the Phosphoserine; by UHMK1 mark. The segment covering E14–K25 has biased composition (basic and acidic residues). Residues D51–P91 form an interaction with CDK2 region. The residue at position 74 (Y74) is a Phosphotyrosine; by SRC. The tract at residues P85–T198 is disordered. Y88 bears the Phosphotyrosine; by ABL, LYN and SRC mark. At Y89 the chain carries Phosphotyrosine. Over residues Q104–Y124 the composition is skewed to polar residues. Positions K153 to R169 match the Nuclear localization signal motif. A Phosphothreonine modification is found at T170. The segment covering S175–Q186 has biased composition (polar residues). Position 187 is a phosphothreonine; by PKB/AKT1, CDK1 and CDK2 (T187). Position 198 is a phosphothreonine; by CaMK1, PKB/AKT1, RPS6KA1, RPS6KA3 and PIM1 (T198).

The protein belongs to the CDI family. Forms a ternary complex composed of CCNE1, CDK2 and CDKN1B. Interacts directly with CCNE1; the interaction is inhibited by CDK2-dependent phosphorylation on Thr-187. Interacts with COPS5, subunit of the COP9 signalosome complex; the interaction leads to CDKN1B degradation. Interacts with NUP50; the interaction leads to nuclear import and degradation of phosphorylated CDKN1B. Interacts with CCND1 and SNX6. Interacts (Thr-198-phosphorylated form) with 14-3-3 proteins, binds strongly YWHAQ, weakly YWHAE and YWHAH, but not YWHAB nor YWHAZ; the interaction with YWHAQ results in translocation to the cytoplasm. Interacts with AKT1 and LYN; the interactions lead to cytoplasmic mislocation, phosphorylation of CDKN1B and inhibition of cell cycle arrest. Forms a ternary complex with CCNA2 and CDK2; CDKN1B inhibits the kinase activity of CDK2 through conformational rearrangements. Interacts (unphosphorylated form) with CDK2. Forms a complex with CDK2 and SPDYA, but does not directly interact with SPDYA. Forms a ternary complex composed of cyclin D, CDK4 and CDKN1B. Interacts (phosphorylated on Tyr-88 and Tyr-89) with CDK4; the interaction is required for cyclin D and CDK4 complex assembly, induces nuclear translocation and activates the CDK4 kinase activity. Interacts with GRB2. Interacts with PIM1. Identified in a complex with SKP1, SKP2 and CKS1B. Interacts with UHMK1; the interaction leads to cytoplasmic mislocation, phosphorylation of CDKN1B and inhibition of cell cycle arrest. Also interacts with CDK1. Dephosphorylated on Thr-187 by PPM1H, leading to CDKN1B stability. In terms of processing, phosphorylated; phosphorylation occurs on serine, threonine and tyrosine residues. Phosphorylation on Ser-10 is the major site of phosphorylation in resting cells, takes place at the G(0)-G(1) phase and leads to protein stability. Phosphorylation on other sites is greatly enhanced by mitogens, growth factors, cMYC and in certain cancer cell lines. The phosphorylated form found in the cytoplasm is inactivate. Phosphorylation on Thr-198 is required for interaction with 14-3-3 proteins. Phosphorylation on Thr-187, by CDK1 and CDK2 leads to protein ubiquitination and proteasomal degradation. Tyrosine phosphorylation promotes this process. Phosphorylation by PKB/AKT1 can be suppressed by LY294002, an inhibitor of the catalytic subunit of PI3K. Phosphorylation on Tyr-88 and Tyr-89 has no effect on binding CDK2, but is required for binding CDK4. Dephosphorylated on tyrosine residues by G-CSF. Dephosphorylated on Thr-187 by PPM1H, leading to CDKN1B stability. Ubiquitinated; in the cytoplasm by the KPC complex (composed of RNF123/KPC1 and UBAC1/KPC2) and, in the nucleus, by SCF(SKP2). The latter requires prior phosphorylation on Thr-187. Ubiquitinated; by a TRIM21-containing SCF(SKP2)-like complex; leads to its degradation. Post-translationally, subject to degradation in the lysosome. Interaction with SNX6 promotes lysosomal degradation.

The protein localises to the nucleus. The protein resides in the cytoplasm. It is found in the endosome. Functionally, important regulator of cell cycle progression. Inhibits the kinase activity of CDK2 bound to cyclin A, but has little inhibitory activity on CDK2 bound to SPDYA. Involved in G1 arrest. Potent inhibitor of cyclin E- and cyclin A-CDK2 complexes. Forms a complex with cyclin type D-CDK4 complexes and is involved in the assembly, stability, and modulation of CCND1-CDK4 complex activation. Acts either as an inhibitor or an activator of cyclin type D-CDK4 complexes depending on its phosphorylation state and/or stoichometry. The protein is Cyclin-dependent kinase inhibitor 1B (CDKN1B) of Cricetulus griseus (Chinese hamster).